Reading from the N-terminus, the 179-residue chain is ATP synthase subunit delta (179 aa).

This sequence belongs to the ATPase delta chain family. In terms of assembly, F-type ATPases have 2 components, F(1) - the catalytic core - and F(0) - the membrane proton channel. F(1) has five subunits: alpha(3), beta(3), gamma(1), delta(1), epsilon(1). F(0) has three main subunits: a(1), b(2) and c(10-14). The alpha and beta chains form an alternating ring which encloses part of the gamma chain. F(1) is attached to F(0) by a central stalk formed by the gamma and epsilon chains, while a peripheral stalk is formed by the delta and b chains.

Its subcellular location is the cell inner membrane. Functionally, f(1)F(0) ATP synthase produces ATP from ADP in the presence of a proton or sodium gradient. F-type ATPases consist of two structural domains, F(1) containing the extramembraneous catalytic core and F(0) containing the membrane proton channel, linked together by a central stalk and a peripheral stalk. During catalysis, ATP synthesis in the catalytic domain of F(1) is coupled via a rotary mechanism of the central stalk subunits to proton translocation. This protein is part of the stalk that links CF(0) to CF(1). It either transmits conformational changes from CF(0) to CF(1) or is implicated in proton conduction. This chain is ATP synthase subunit delta, found in Anaeromyxobacter sp. (strain K).